We begin with the raw amino-acid sequence, 185 residues long: Large ribosomal subunit protein uL5 (185 aa).

It belongs to the universal ribosomal protein uL5 family. Part of the 50S ribosomal subunit; part of the 5S rRNA/L5/L18/L25 subcomplex. Contacts the 5S rRNA and the P site tRNA. Forms a bridge to the 30S subunit in the 70S ribosome.

This is one of the proteins that bind and probably mediate the attachment of the 5S RNA into the large ribosomal subunit, where it forms part of the central protuberance. In the 70S ribosome it contacts protein S13 of the 30S subunit (bridge B1b), connecting the 2 subunits; this bridge is implicated in subunit movement. Contacts the P site tRNA; the 5S rRNA and some of its associated proteins might help stabilize positioning of ribosome-bound tRNAs. In Rhizobium leguminosarum bv. trifolii (strain WSM2304), this protein is Large ribosomal subunit protein uL5.